The chain runs to 140 residues: METELMRIGVSLPDTLLSKFDEIIEKRGYSSRSEGIRDAIRSYISYYEWMGDIKGHRVGTVAVIYDHTKRGLSNALADIQHHYSHLIKSSVHIHLDHDNCFEVVVLDGDGEEIKELAEAIMSLKGVKFSKLTTVASNEKI.

Residues histidine 81, histidine 92, histidine 94, and cysteine 100 each contribute to the Ni(2+) site.

It belongs to the transcriptional regulatory CopG/NikR family. It depends on Ni(2+) as a cofactor.

In terms of biological role, transcriptional regulator. This Methanosarcina mazei (strain ATCC BAA-159 / DSM 3647 / Goe1 / Go1 / JCM 11833 / OCM 88) (Methanosarcina frisia) protein is Putative nickel-responsive regulator 2.